We begin with the raw amino-acid sequence, 98 residues long: Small ribosomal subunit protein uS19 (98 aa).

The tract at residues 77 to 98 (TRTFRGHAGGKAEKGGSAPKKK) is disordered.

Belongs to the universal ribosomal protein uS19 family.

Its function is as follows. Protein S19 forms a complex with S13 that binds strongly to the 16S ribosomal RNA. The protein is Small ribosomal subunit protein uS19 of Chlorobium phaeobacteroides (strain DSM 266 / SMG 266 / 2430).